Consider the following 387-residue polypeptide: Sialic acid-binding Ig-like lectin 13 (387 aa).

Residues 1 to 15 (MLPLLLPLLWAGALA) form the signal peptide. The Ig-like V-type domain maps to 16–138 (LEGIFQLEVP…KDPPLSVHVT (123 aa)). The Extracellular segment spans residues 16–341 (LEGIFQLEVP…QRKSGPMAEV (326 aa)). Intrachain disulfides connect Cys35-Cys168, Cys40-Cys100, and Cys162-Cys211. Asn99 carries N-linked (GlcNAc...) asparagine glycosylation. Arg118 contributes to the N-acetylneuraminate binding site. Residues 144 to 227 (PDILIPGALK…AGVTTTRTVR (84 aa)) enclose the Ig-like C2-type 1 domain. 3 N-linked (GlcNAc...) asparagine glycosylation sites follow: Asn229, Asn236, and Asn254. The Ig-like C2-type 2 domain occupies 234–326 (PQNLTLTVFQ…RNPLGSQQVS (93 aa)). A disulfide bridge connects residues Cys270 and Cys314. A helical membrane pass occupies residues 342 to 362 (VLVAIGEAAVKILLLFLCLII). The Cytoplasmic segment spans residues 363 to 387 (LRVKSHRRKAAKAATGVEAAKVVKG).

It belongs to the immunoglobulin superfamily. SIGLEC (sialic acid binding Ig-like lectin) family.

It localises to the membrane. Functionally, putative adhesion molecule that mediates sialic-acid dependent binding to cells. This chain is Sialic acid-binding Ig-like lectin 13 (SIGLEC13), found in Pan troglodytes (Chimpanzee).